Consider the following 483-residue polypeptide: MIKLEQVVEILKKDNNFREISSAGEYYFNWPKEVNFDQLSYDSRKSTKDTLFFAKGLNFKKEYLTDLEAAFYVSEFDYEVALPAIIVTDVKRAMALIAANFYKFPQNKLKTLALTGTKGKTTSAYFAKSILDKMNGGKTALLSTAQTTLDGQNYFKSELTTPESLDLLEMMAKALENGMTHLVMEVSSQAYKTERVYGLTFDVGVFLNISPDHIGPVEHPTLEDYFYCKRQLLKNSRYFVANAEMNHFAIIKEELNERKIPHAFYGADSENKIIESKGLHFVTDGSVSGEFDIRLLGRFNQENALATALATKALGASFENIRQGLASAIVPGRMELLTAKNGAHIYIDYAHNGLSLENLVEVVEDHHAGQLFLVLGSTGNKGESRRKDFGQVIENHPRLNVILTTDDSNRENPKTIADEIASFVSRELDFELDREFAIKKAISKTQNSDDAVIIAGKGADMFQLKDGKREPYIGDSPAAQKYL.

Serine 43 serves as a coordination point for UDP-N-acetyl-alpha-D-muramoyl-L-alanyl-D-glutamate. Position 116-122 (116-122 (GTKGKTT)) interacts with ATP. Residues 160-161 (TT), serine 187, and arginine 195 contribute to the UDP-N-acetyl-alpha-D-muramoyl-L-alanyl-D-glutamate site. Residue lysine 229 is modified to N6-carboxylysine.

This sequence belongs to the MurCDEF family. MurE subfamily. Post-translationally, carboxylation is probably crucial for Mg(2+) binding and, consequently, for the gamma-phosphate positioning of ATP.

The protein localises to the cytoplasm. Its pathway is cell wall biogenesis; peptidoglycan biosynthesis. Its function is as follows. Catalyzes the addition of an amino acid to the nucleotide precursor UDP-N-acetylmuramoyl-L-alanyl-D-glutamate (UMAG) in the biosynthesis of bacterial cell-wall peptidoglycan. The chain is UDP-N-acetylmuramyl-tripeptide synthetase from Lactococcus lactis subsp. cremoris (strain SK11).